A 300-amino-acid polypeptide reads, in one-letter code: HTH-type transcriptional activator NahR (300 aa).

The region spanning 6–63 (LDLNLLVVFNQLLVDRRVSITAENLGLTQPAVSNALKRLRTSLQDPLFVRTHQGMEPT) is the HTH lysR-type domain. A DNA-binding region (H-T-H motif) is located at residues 23–42 (VSITAENLGLTQPAVSNALK).

Belongs to the LysR transcriptional regulatory family.

The protein localises to the cytoplasm. In terms of biological role, regulates the expression of the naphthalene (nahA-F) and salicylate (nahG-M) metabolism genes. The polypeptide is HTH-type transcriptional activator NahR (nahR) (Pseudomonas putida (Arthrobacter siderocapsulatus)).